The sequence spans 435 residues: Legumain (435 aa).

The N-terminal stretch at 1-17 (MTWRVAVLLSLVLGAGA) is a signal peptide. Residue Asn-93 is glycosylated (N-linked (GlcNAc...) asparagine). His-150 is a catalytic residue. N-linked (GlcNAc...) asparagine glycosylation is present at Asn-169. Residue Cys-191 is the Nucleophile of the active site. N-linked (GlcNAc...) asparagine glycosylation is found at Asn-215, Asn-265, and Asn-274. A propeptide spanning residues 326–435 (NMKESQVLVG…AMDKVCLSHY (110 aa)) is cleaved from the precursor. Cystine bridges form between Cys-380–Cys-414 and Cys-392–Cys-431.

It belongs to the peptidase C13 family. Homodimer before autocatalytic removal of the propeptide. Monomer after autocatalytic processing. May interact with integrins. In terms of processing, activated by autocatalytic processing at pH 4. In terms of tissue distribution, detected in kidney cortex (at protein level).

The protein localises to the lysosome. The catalysed reaction is Hydrolysis of proteins and small molecule substrates at -Asn-|-Xaa- bonds.. Has a strict specificity for hydrolysis of asparaginyl bonds. Can also cleave aspartyl bonds slowly, especially under acidic conditions. Involved in the processing of proteins for MHC class II antigen presentation in the lysosomal/endosomal system. Also involved in MHC class I antigen presentation in cross-presenting dendritic cells by mediating cleavage and maturation of Perforin-2 (MPEG1), thereby promoting antigen translocation in the cytosol. Required for normal lysosomal protein degradation in renal proximal tubules. Required for normal degradation of internalized EGFR. Plays a role in the regulation of cell proliferation via its role in EGFR degradation. In Rattus norvegicus (Rat), this protein is Legumain (Lgmn).